Consider the following 152-residue polypeptide: Ribosome maturation factor RimP (152 aa).

This sequence belongs to the RimP family.

Its subcellular location is the cytoplasm. In terms of biological role, required for maturation of 30S ribosomal subunits. This is Ribosome maturation factor RimP from Proteus mirabilis (strain HI4320).